Consider the following 633-residue polypeptide: Guanylate-binding protein 6 (633 aa).

Residues 1-310 (MESGPKMLAP…EAINSGAVPC (310 aa)) form a GTPase domain (Globular) region. The GB1/RHD3-type G domain maps to 35 to 277 (SQPVVVVAIV…FCSYIFTHAR (243 aa)). Residues 45 to 52 (GLYRTGKS), 67 to 69 (LGS), and 97 to 101 (DTEGL) each bind GTP.

This sequence belongs to the TRAFAC class dynamin-like GTPase superfamily. GB1/RHD3 GTPase family. GB1 subfamily. In terms of processing, (Microbial infection) Ubiquitinated by S.flexneri IpaH9.8, leading to its degradation by the proteasome, thereby preventing its ability to promote host defense against bacterial infection.

It is found in the cytoplasmic vesicle. The enzyme catalyses GTP + H2O = GDP + phosphate + H(+). Interferon (IFN)-inducible GTPase that plays important roles in innate immunity against a diverse range of bacterial, viral and protozoan pathogens, such as bacterial pathogens Listeria monocytogenes and Mycobacterium bovis BCG as well as the protozoan pathogen Toxoplasma gondii. Confers protection to several pathogens, including the bacterial pathogens Listeria monocytogenes and Mycobacterium bovis BCG as well as the protozoan pathogen Toxoplasma gondii. This chain is Guanylate-binding protein 6 (GBP6), found in Homo sapiens (Human).